A 354-amino-acid polypeptide reads, in one-letter code: Methionine import ATP-binding protein MetN (354 aa).

The 243-residue stretch at 8 to 250 folds into the ABC transporter domain; it reads LDHIDITFHQ…PKEALTQEFI (243 aa). 42–49 lines the ATP pocket; it reads GYSGAGKS.

Belongs to the ABC transporter superfamily. Methionine importer (TC 3.A.1.24) family. In terms of assembly, the complex is composed of two ATP-binding proteins (MetN), two transmembrane proteins (MetI) and a solute-binding protein (MetQ).

The protein localises to the cell membrane. The enzyme catalyses L-methionine(out) + ATP + H2O = L-methionine(in) + ADP + phosphate + H(+). The catalysed reaction is D-methionine(out) + ATP + H2O = D-methionine(in) + ADP + phosphate + H(+). Part of the ABC transporter complex MetNIQ involved in methionine import. Responsible for energy coupling to the transport system. The sequence is that of Methionine import ATP-binding protein MetN from Streptococcus pyogenes serotype M4 (strain MGAS10750).